The following is a 363-amino-acid chain: uncharacterized protein (363 aa).

A disordered region spans residues 35 to 262 (TVPGPPGAES…GLSPCCGDGG (228 aa)). Polar residues predominate over residues 56–75 (AVSSSRNPNSAGRTPNSYLT). The segment covering 100 to 116 (GADPALGSLPAAGLSGL) has biased composition (low complexity).

This is an uncharacterized protein from Homo sapiens (Human).